A 486-amino-acid chain; its full sequence is Cardiolipin synthase A (486 aa).

Helical transmembrane passes span threonine 3 to valine 23 and methionine 38 to valine 58. PLD phosphodiesterase domains lie at methionine 219–arginine 246 and glutamate 399–serine 426. Catalysis depends on residues histidine 224, lysine 226, aspartate 231, histidine 404, lysine 406, and aspartate 411.

It belongs to the phospholipase D family. Cardiolipin synthase subfamily. ClsA sub-subfamily.

It localises to the cell inner membrane. It carries out the reaction 2 a 1,2-diacyl-sn-glycero-3-phospho-(1'-sn-glycerol) = a cardiolipin + glycerol. Catalyzes the reversible phosphatidyl group transfer from one phosphatidylglycerol molecule to another to form cardiolipin (CL) (diphosphatidylglycerol) and glycerol. In Escherichia coli O157:H7 (strain EC4115 / EHEC), this protein is Cardiolipin synthase A.